Reading from the N-terminus, the 457-residue chain is tRNA-2-methylthio-N(6)-dimethylallyladenosine synthase (457 aa).

Residues 3-120 (KKVYIKTFGC…LPQMIDQRRA (118 aa)) enclose the MTTase N-terminal domain. [4Fe-4S] cluster contacts are provided by C12, C49, C83, C157, C161, and C164. The 235-residue stretch at 143–377 (RVEGPSAFVS…QATIEENVAR (235 aa)) folds into the Radical SAM core domain. The 68-residue stretch at 380-447 (RSMVGKVERI…PHSLRGELLL (68 aa)) folds into the TRAM domain.

The protein belongs to the methylthiotransferase family. MiaB subfamily. As to quaternary structure, monomer. The cofactor is [4Fe-4S] cluster.

The protein resides in the cytoplasm. The catalysed reaction is N(6)-dimethylallyladenosine(37) in tRNA + (sulfur carrier)-SH + AH2 + 2 S-adenosyl-L-methionine = 2-methylsulfanyl-N(6)-dimethylallyladenosine(37) in tRNA + (sulfur carrier)-H + 5'-deoxyadenosine + L-methionine + A + S-adenosyl-L-homocysteine + 2 H(+). Its function is as follows. Catalyzes the methylthiolation of N6-(dimethylallyl)adenosine (i(6)A), leading to the formation of 2-methylthio-N6-(dimethylallyl)adenosine (ms(2)i(6)A) at position 37 in tRNAs that read codons beginning with uridine. This Burkholderia ambifaria (strain MC40-6) protein is tRNA-2-methylthio-N(6)-dimethylallyladenosine synthase.